The chain runs to 211 residues: Putative truncated flagellar export/assembly protein LafU (211 aa).

Residues 58–176 (LRVLIKDDQN…RIEIMVLTKS (119 aa)) enclose the OmpA-like domain.

Belongs to the MotB family.

The chain is Putative truncated flagellar export/assembly protein LafU from Escherichia coli (strain K12).